The following is a 274-amino-acid chain: Non-heme haloperoxidase (274 aa).

Residues 22-254 (PIMFHHGWPL…RLKVYPGLSH (233 aa)) enclose the AB hydrolase-1 domain. Residues Ser-95, Asp-225, and His-254 contribute to the active site.

This sequence belongs to the AB hydrolase superfamily. Bacterial non-heme haloperoxidase / perhydrolase family.

This is Non-heme haloperoxidase (thcF) from Rhodococcus erythropolis (Arthrobacter picolinophilus).